The primary structure comprises 59 residues: Conotoxin ViVA (59 aa).

The N-terminal stretch at 1–19 is a signal peptide; the sequence is MRCVPVFIILLLLIPSASS. Positions 20 to 46 are excised as a propeptide; the sequence is AAVQPKTEKDDVPLASVHDSALRILSR. Q47 is subject to Pyrrolidone carboxylic acid. 2 disulfide bridges follow: C48–C55 and C49–C56. An Isoleucine amide modification is found at I58.

This sequence belongs to the conotoxin T superfamily. As to expression, expressed by the venom duct.

Its subcellular location is the secreted. The protein is Conotoxin ViVA of Conus virgo (Virgin cone).